A 550-amino-acid polypeptide reads, in one-letter code: Glucose-6-phosphate isomerase (550 aa).

Glu356 serves as the catalytic Proton donor. Residues His387 and Lys515 contribute to the active site.

Belongs to the GPI family.

Its subcellular location is the cytoplasm. The catalysed reaction is alpha-D-glucose 6-phosphate = beta-D-fructose 6-phosphate. It participates in carbohydrate biosynthesis; gluconeogenesis. Its pathway is carbohydrate degradation; glycolysis; D-glyceraldehyde 3-phosphate and glycerone phosphate from D-glucose: step 2/4. Functionally, catalyzes the reversible isomerization of glucose-6-phosphate to fructose-6-phosphate. The protein is Glucose-6-phosphate isomerase of Vibrio campbellii (strain ATCC BAA-1116).